A 169-amino-acid polypeptide reads, in one-letter code: MSTAAKRRLIRDFKRLTSDAPIGISGSPNPDNIMVWNAVIFGPPETPFEDGSFRLTLTFTDAYPNKPPTVRFISKMFHPNIYANGELCLDILQNRWSPTYDVAAILTSVQSLLNDPNPASPANVDAAQLFKENLKEYERRVKKTVELSWVDNADEIEAEVVEADEGSSS.

The region spanning A4–V150 is the UBC core domain. C88 functions as the Glycyl thioester intermediate in the catalytic mechanism.

The protein belongs to the ubiquitin-conjugating enzyme family.

The protein resides in the cytoplasm. Its subcellular location is the nucleus. The enzyme catalyses S-ubiquitinyl-[E1 ubiquitin-activating enzyme]-L-cysteine + [E2 ubiquitin-conjugating enzyme]-L-cysteine = [E1 ubiquitin-activating enzyme]-L-cysteine + S-ubiquitinyl-[E2 ubiquitin-conjugating enzyme]-L-cysteine.. It functions in the pathway protein modification; protein ubiquitination. In terms of biological role, catalyzes the covalent attachment of ubiquitin to other proteins. Plays a role in transcription regulation by catalyzing the monoubiquitination of histone H2B to form H2BK123ub1. H2BK123ub1 gives a specific tag for epigenetic transcriptional activation and is also a prerequisite for H3K4me and H3K79me formation. Also involved in postreplication repair of UV-damaged DNA, in N-end rule-dependent protein degradation and in sporulation. In Cryptococcus neoformans var. neoformans serotype D (strain B-3501A) (Filobasidiella neoformans), this protein is Ubiquitin-conjugating enzyme E2 2 (UBC2).